We begin with the raw amino-acid sequence, 361 residues long: Phosphoserine aminotransferase (361 aa).

Residue arginine 42 coordinates L-glutamate. Residues 76 to 77, tryptophan 102, threonine 152, aspartate 172, and glutamine 195 each bind pyridoxal 5'-phosphate; that span reads AT. N6-(pyridoxal phosphate)lysine is present on lysine 196. Residue 237–238 participates in pyridoxal 5'-phosphate binding; sequence NT.

The protein belongs to the class-V pyridoxal-phosphate-dependent aminotransferase family. SerC subfamily. Homodimer. Pyridoxal 5'-phosphate serves as cofactor.

The protein resides in the cytoplasm. The enzyme catalyses O-phospho-L-serine + 2-oxoglutarate = 3-phosphooxypyruvate + L-glutamate. The catalysed reaction is 4-(phosphooxy)-L-threonine + 2-oxoglutarate = (R)-3-hydroxy-2-oxo-4-phosphooxybutanoate + L-glutamate. Its pathway is amino-acid biosynthesis; L-serine biosynthesis; L-serine from 3-phospho-D-glycerate: step 2/3. It participates in cofactor biosynthesis; pyridoxine 5'-phosphate biosynthesis; pyridoxine 5'-phosphate from D-erythrose 4-phosphate: step 3/5. Its function is as follows. Catalyzes the reversible conversion of 3-phosphohydroxypyruvate to phosphoserine and of 3-hydroxy-2-oxo-4-phosphonooxybutanoate to phosphohydroxythreonine. The polypeptide is Phosphoserine aminotransferase (Xanthomonas campestris pv. campestris (strain 8004)).